The chain runs to 1170 residues: MLDLNNFDRIRIGLASPDQIRAWSSGEVKKPETINYRTLKPERDGLFCERIFGPTRDWECHCGKYKRVRYKGVVCDRCGVEVTRSKVRRERLGHIELAAPVSHIWYFKGIPSRMGLLLDMSPRALEKVLYFVSYIVTDPGDTGLIKKQLLTETEYRDCRERYGNAFKASMGAEAIKKLLEEINLEELARELRQELKEVTGQRKIRAIRRLEVVEAFRKSGNRPEWMILEVIPVISPELRPMVQLDGGRFATSDLNDLYRRVINRNNRLKRLLDLGAPDIIVRNEKRMLQEAVDALIDNGRRGRPVTGPGNRPLKSLSDMLKGKQGRFRQNLLGKRVDYSGRSVIVVGPELHLHQCGLPKEMALELFKPFVMKRLVNDGYAHNIKSAKRMVERVRPEVWEVLEEVIKEHPVLLNRAPTLHRLGIQAFEPVLVEGRAIQIHPMVCTAYNADFDGDQMAVHVPLSAEAQAEARLLMLSSNNILNPKDGRPVAIPTQDMVLGIYYLTVEKQGVPGEGKAFKDPEEAVMAYYNNAVSLHAAVKVRMPGMGRIETTVGRIIFNEVIPRELGYYNQVIDKKVLSKIVDDCYRKLGFSATSKLLDGIKKLGFTFATRAGVTIGIQDITIPARKKEILKEAEQQVEKVEQQYRRGLITEEERYRKVIGIWNDATKEVTDALIETLDKFNPVYMMANSGARGNIQQIRQLAGMRGLMADPSGRIIDLPIKANFREGLTVLEYFISTHGARKGLADTALRTADSGYLTRRLVDVAQDVIVREVDCGTGQGIEVTEIKDGNEVIEKLEDRIIGRVALEDVKHPETGEILAFAGEEITESEAAKIVAAGIKKVKIRSVLTCRTRYGVCIKCYGRNLATGRQVDIGEAVGIIAAQSIGEPGTQLTMRTFHTGGVAGDDITQGLPRVEELFEARRPKGQAIIAEADGTVEVREVKGRREIEVTAEDGTKSVYQVPYGARLKVRDGDRVYAGDELTEGSVNPHDLLKIKGVQGVQIYLLQEVQRVYRLQGVDINDKHIEVMIRQMLRKVKVDEPGDTDLLPGGLIDIFEFEDENRRIKNLGGEPATAKPVLLGITKASLATDSFLSAASFQETTRVLTEAAIKGKLDLLLGLKENVIIGKLVPAGTGMSRYRNISVVAESEPGEENGEPGGERLYGMDELYGETAN.

4 residues coordinate Zn(2+): Cys60, Cys62, Cys75, and Cys78. The Mg(2+) site is built by Asp449, Asp451, and Asp453. Positions 774, 848, 855, and 858 each coordinate Zn(2+). The tract at residues 1145–1170 (EPGEENGEPGGERLYGMDELYGETAN) is disordered.

It belongs to the RNA polymerase beta' chain family. In terms of assembly, the RNAP catalytic core consists of 2 alpha, 1 beta, 1 beta' and 1 omega subunit. When a sigma factor is associated with the core the holoenzyme is formed, which can initiate transcription. The cofactor is Mg(2+). Zn(2+) is required as a cofactor.

It carries out the reaction RNA(n) + a ribonucleoside 5'-triphosphate = RNA(n+1) + diphosphate. In terms of biological role, DNA-dependent RNA polymerase catalyzes the transcription of DNA into RNA using the four ribonucleoside triphosphates as substrates. The polypeptide is DNA-directed RNA polymerase subunit beta' (Pelotomaculum thermopropionicum (strain DSM 13744 / JCM 10971 / SI)).